The following is a 46-amino-acid chain: Photosystem II reaction center protein K (46 aa).

A propeptide spanning residues 1–9 is cleaved from the precursor; the sequence is MSTLPILLA. Residues 25–45 form a helical membrane-spanning segment; sequence LPSIPVLFLLLAFVWQAAVSF.

Belongs to the PsbK family. In terms of assembly, PSII is composed of 1 copy each of membrane proteins PsbA, PsbB, PsbC, PsbD, PsbE, PsbF, PsbH, PsbI, PsbJ, PsbK, PsbL, PsbM, PsbT, PsbX, PsbY, PsbZ, Psb30/Ycf12, at least 3 peripheral proteins of the oxygen-evolving complex and a large number of cofactors. It forms dimeric complexes.

It is found in the plastid. The protein localises to the chloroplast thylakoid membrane. Its function is as follows. One of the components of the core complex of photosystem II (PSII). PSII is a light-driven water:plastoquinone oxidoreductase that uses light energy to abstract electrons from H(2)O, generating O(2) and a proton gradient subsequently used for ATP formation. It consists of a core antenna complex that captures photons, and an electron transfer chain that converts photonic excitation into a charge separation. The polypeptide is Photosystem II reaction center protein K (Nephroselmis olivacea (Green alga)).